We begin with the raw amino-acid sequence, 992 residues long: Ribosome quality control complex subunit NEMF homolog (992 aa).

Positions 214–231 are enriched in basic and acidic residues; sequence KETTEETPEAEDKPEKGG. The disordered stretch occupies residues 214–245; that stretch reads KETTEETPEAEDKPEKGGKKQRKKQQNTKLEQ. Coiled-coil stretches lie at residues 331-370 and 481-514; these read STQE…LTKV and SAAQ…VRTI. 2 disordered regions span residues 688 to 715 and 771 to 895; these read EVEH…NTEI and GPSR…GDVD. A compositionally biased stretch (polar residues) spans 702-715; sequence SNINLSEPSSNTEI. Residues 774-839 adopt a coiled-coil conformation; sequence RKKQVSAKKT…QDDEEREIRM (66 aa). The span at 782–796 shows a compositional bias: basic and acidic residues; sequence KTKEDKARAKQEAAK. Positions 814–825 are enriched in basic residues; sequence RGQKGKLKKMKQ. The span at 845 to 874 shows a compositional bias: basic and acidic residues; sequence SGKEKPQASADKVVEKSESTKEYVKPEKSA.

The protein belongs to the NEMF family. As to quaternary structure, component of the ribosome quality control complex (RQC), composed of at least the E3 ubiquitin ligase l(3)76BDr/LTN1 and Clbn/NEMF associated with the 60S ribosomal subunit. The complex probably also contains TCF25 as well as TER94/VCP and its ubiquitin-binding cofactors. Interacts (via its C-terminus) with pros (via its homeobox). Interacts (via its N-terminus) with emb. Expressed in enterocytes (at protein level).

It is found in the nucleus. The protein localises to the cytoplasm. It localises to the mitochondrion outer membrane. Functionally, key component of the ribosome quality control complex (RQC), a ribosome-associated complex that mediates the extraction of incompletely synthesized nascent chains from stalled ribosomes as well as their ubiquitin-mediated proteasomal degradation. Thereby, frees 60S subunit ribosomes from the stalled translation complex and prevents the accumulation of nascent polypeptide chains that are potentially toxic for the cell. Within the RQC complex, Clbn/NEMF specifically binds stalled 60S ribosomal subunits by recognizing an exposed, nascent chain-conjugated tRNA moiety. Following binding to stalled 60S ribosomal subunits, Clbn/NEMF mediates CAT tailing by recruiting alanine-charged tRNA to the A-site and directing the elongation of stalled nascent chains independently of mRNA or 40S subunits, leading to non-templated C-terminal alanine extensions (CAT tails). On mitochondrial surface, plays a role in mitochondrial-stress induced translational termination impairment and protein carboxyl terminal extension (MISTERMINATE). Plays a role in regulating nuclear transport possibly through directly binding to both emb and cargo proteins. Plays a role in the regulation of G1-to-S cell cycle transition. Regulates S phase checkpoint by antagonizing E2F1 activity. Together with hid and tefu/ATM, plays a role in DNA damage-induced apoptosis through both p53-dependent and -independent activity. Plays an essential role in the regulation of mitochondrial structure and redox state in enterocytes which is essential for the control of intestinal stem cells proliferation and intestinal homeostasis. The chain is Ribosome quality control complex subunit NEMF homolog from Drosophila melanogaster (Fruit fly).